Reading from the N-terminus, the 522-residue chain is Wax ester synthase/diacylglycerol acyltransferase 4 (522 aa).

The segment covering 1-12 has biased composition (basic and acidic residues); it reads MEIETRPHISGD. The disordered stretch occupies residues 1 to 20; it reads MEIETRPHISGDEKEEEQPL. Topologically, residues 1–205 are cytoplasmic; the sequence is MEIETRPHIS…SDSRLLWLVK (205 aa). His-149 (proton acceptor) is an active-site residue. Residues 206–226 form a helical membrane-spanning segment; sequence VIWTAVILGLNTVCDALEFIV. The Lumenal segment spans residues 227–522; that stretch reads TTLFVKDTET…QIAGLLYRML (296 aa). 2 N-linked (GlcNAc...) asparagine glycosylation sites follow: Asn-270 and Asn-409.

In the N-terminal section; belongs to the long-chain O-acyltransferase family. As to expression, mostly expressed in roots, flowers and siliques.

The protein localises to the cell membrane. It is found in the endoplasmic reticulum membrane. It catalyses the reaction an acyl-CoA + a 1,2-diacyl-sn-glycerol = a triacyl-sn-glycerol + CoA. The enzyme catalyses a long chain fatty alcohol + a fatty acyl-CoA = a wax ester + CoA. It participates in glycerolipid metabolism; triacylglycerol biosynthesis. The protein operates within lipid metabolism. In terms of biological role, bifunctional wax ester synthase/diacylglycerol acyltransferase. Involved in cuticular wax biosynthesis. This is Wax ester synthase/diacylglycerol acyltransferase 4 from Arabidopsis thaliana (Mouse-ear cress).